A 116-amino-acid polypeptide reads, in one-letter code: Ribosome-binding factor A (116 aa).

This sequence belongs to the RbfA family. Monomer. Binds 30S ribosomal subunits, but not 50S ribosomal subunits or 70S ribosomes.

The protein resides in the cytoplasm. One of several proteins that assist in the late maturation steps of the functional core of the 30S ribosomal subunit. Associates with free 30S ribosomal subunits (but not with 30S subunits that are part of 70S ribosomes or polysomes). Required for efficient processing of 16S rRNA. May interact with the 5'-terminal helix region of 16S rRNA. This is Ribosome-binding factor A from Streptococcus pyogenes serotype M28 (strain MGAS6180).